A 258-amino-acid chain; its full sequence is Imidazole glycerol phosphate synthase subunit HisF (258 aa).

Active-site residues include Asp11 and Asp130.

Belongs to the HisA/HisF family. In terms of assembly, heterodimer of HisH and HisF.

The protein localises to the cytoplasm. The catalysed reaction is 5-[(5-phospho-1-deoxy-D-ribulos-1-ylimino)methylamino]-1-(5-phospho-beta-D-ribosyl)imidazole-4-carboxamide + L-glutamine = D-erythro-1-(imidazol-4-yl)glycerol 3-phosphate + 5-amino-1-(5-phospho-beta-D-ribosyl)imidazole-4-carboxamide + L-glutamate + H(+). Its pathway is amino-acid biosynthesis; L-histidine biosynthesis; L-histidine from 5-phospho-alpha-D-ribose 1-diphosphate: step 5/9. IGPS catalyzes the conversion of PRFAR and glutamine to IGP, AICAR and glutamate. The HisF subunit catalyzes the cyclization activity that produces IGP and AICAR from PRFAR using the ammonia provided by the HisH subunit. This is Imidazole glycerol phosphate synthase subunit HisF from Haemophilus influenzae (strain PittEE).